The sequence spans 374 residues: MSRVPSPPPPAEMSSGPVAESWCYTQIKVVKFSYMWTINNFSFCREEMGEVIKSSTFSSGANDKLKWCLRVNPKGLDEESKDYLSLYLLLVSCPKSEVRAKFKFSILNAKGEETKAMESQRAYRFVQGKDWGFKKFIRRDFLLDEANGLLPDDKLTLFCEVSVVQDSVNISGQNTMNMVKVPECRLADELGGLWENSRFTDCCLCVAGQEFQAHKAILAARSPVFSAMFEHEMEESKKNRVEIKDVEPDVFKEMMCFIYTGKASNLDKMADDLLAAADKYALERLKVMCEEALCSNLSVENAAEILILADLHSADQLKTQAVDFINYHASDVMETSGWKSMVVSHPHLVAEAYRSLASAQCPFLGPPRKRLKQS.

Positions 31 to 161 (KFSYMWTINN…DDKLTLFCEV (131 aa)) constitute an MATH domain. The required for nuclear localization stretch occupies residues 71–191 (VNPKGLDEES…PECRLADELG (121 aa)). Residues 173–297 (QNTMNMVKVP…MCEEALCSNL (125 aa)) enclose the BTB domain. Residues 297 to 355 (LSVENAAEILILADLHSADQLKTQAVDFINYHASDVMETSGWKSMVVSHPHLVAEAYRS) form a homodimerization region.

The protein belongs to the Tdpoz family. Homodimer. Part of cullin-RING-based BCR (BTB-CUL3-RBX1) E3 ubiquitin-protein ligase complexes that contain CUL3 and SPOP, plus a target protein.

It is found in the nucleus. The protein resides in the nucleus speckle. It participates in protein modification; protein ubiquitination. In terms of biological role, component of a cullin-RING-based BCR (BTB-CUL3-RBX1) E3 ubiquitin-protein ligase complex that mediates the ubiquitination of target proteins, leading most often to their proteasomal degradation. This Xenopus laevis (African clawed frog) protein is Speckle-type POZ protein A (spop-a).